We begin with the raw amino-acid sequence, 525 residues long: MTENIHKHRILILDFGSQYTQLVARRVRELGVYCELWAWDVTEAQIRDFNPSGIILSGGPESTTEENSPRAPQYVFEAGVPVFGVCYGMQTMAMQLGGHVEASNEREFGYAQVEVVNDSALVRGIEDALTADGKPLLDVWMSHGDKVTAIPSDFITVASTESCPFAIMANEEKRFYGVQFHPEVTHTRQGMRMLERFVRDICQCEALWTPAKIIDDAVARIREQVGDDKVILGLSGGVDSSVTAMLLHRAIGKNLTCVFVDNGLLRLNEAEQVLDMFGDHFGLNIVHVPAEDRFLSALAGENDPEAKRKIIGRVFVEVFDEEALKLEDVKWLAQGTIYPDVIESAASATGKAHVIKSHHNVGGLPKEMKMGLVEPLKELFKDEVRKIGLELGLPYDMLYRHPFPGPGLGVRVLGEVKKEYCDLLRRADAIFIEELRKADLYDKVSQAFTVFLPVRSVGVMGDGRKYDWVVSLRAVETIDFMTAHWAHLPYDFLGRVSNRIINEVNGISRVVYDISGKPPATIEWE.

Residues 9–207 form the Glutamine amidotransferase type-1 domain; that stretch reads RILILDFGSQ…VRDICQCEAL (199 aa). Catalysis depends on C86, which acts as the Nucleophile. Catalysis depends on residues H181 and E183. The 193-residue stretch at 208–400 folds into the GMPS ATP-PPase domain; sequence WTPAKIIDDA…LGLPYDMLYR (193 aa). ATP is bound at residue 235-241; that stretch reads SGGVDSS.

Homodimer.

The catalysed reaction is XMP + L-glutamine + ATP + H2O = GMP + L-glutamate + AMP + diphosphate + 2 H(+). It participates in purine metabolism; GMP biosynthesis; GMP from XMP (L-Gln route): step 1/1. In terms of biological role, catalyzes the synthesis of GMP from XMP. This is GMP synthase [glutamine-hydrolyzing] from Escherichia coli (strain K12 / MC4100 / BW2952).